The primary structure comprises 322 residues: tRNA dimethylallyltransferase (322 aa).

ATP is bound at residue 21–28; that stretch reads GQTAVGKT. Residue 23 to 28 coordinates substrate; that stretch reads TAVGKT. The interval 46-49 is interaction with substrate tRNA; it reads DSGC.

Belongs to the IPP transferase family. Monomer. The cofactor is Mg(2+).

The catalysed reaction is adenosine(37) in tRNA + dimethylallyl diphosphate = N(6)-dimethylallyladenosine(37) in tRNA + diphosphate. Catalyzes the transfer of a dimethylallyl group onto the adenine at position 37 in tRNAs that read codons beginning with uridine, leading to the formation of N6-(dimethylallyl)adenosine (i(6)A). The chain is tRNA dimethylallyltransferase from Wigglesworthia glossinidia brevipalpis.